Consider the following 347-residue polypeptide: Adenine deaminase (347 aa).

Zn(2+) is bound by residues His-16, His-18, and His-204. Glu-207 (proton donor) is an active-site residue. Residue Asp-285 coordinates Zn(2+). Asp-286 is a substrate binding site.

It belongs to the metallo-dependent hydrolases superfamily. Adenosine and AMP deaminases family. Adenine deaminase type 2 subfamily. It depends on Zn(2+) as a cofactor.

The protein resides in the cytoplasm. Its subcellular location is the nucleus. It catalyses the reaction adenine + H2O + H(+) = hypoxanthine + NH4(+). In terms of biological role, catalyzes the hydrolytic deamination of adenine to hypoxanthine. Plays an important role in the purine salvage pathway and in nitrogen catabolism. This chain is Adenine deaminase, found in Candida glabrata (strain ATCC 2001 / BCRC 20586 / JCM 3761 / NBRC 0622 / NRRL Y-65 / CBS 138) (Yeast).